The sequence spans 30 residues: 136 kDa hydroxyproline-rich cell wall glycoprotein, major component (30 aa).

Residues P8, P9, P10, P11, P12, P17, P18, P19, P20, P26, P27, P28, and P29 each carry the 4-hydroxyproline modification.

O-glycosylated.

The protein localises to the secreted. Its subcellular location is the cell wall. The chain is 136 kDa hydroxyproline-rich cell wall glycoprotein, major component from Phaseolus vulgaris (Kidney bean).